Here is a 304-residue protein sequence, read N- to C-terminus: MRLPIFLDTDPGIDDAVAIAAAIFAPELDLQLMTTVAGNVSVEKTTRNALQLLHFWNAEIPLAQGAAVPLVRAPRDAASVHGESGMAGYDFVEHNRQPLGIPAFLAIRDALMRAPEPVTLVAIGPLTNIALLLSQCPECKPYIRRLVIMGGSAGRGNCTPNAEFNIAADPEAAACVFRSGIEIVMCGLDVTNQAILTPDYLATLPELNRTGKMLHALFSHYRSGSMQSGLRMHDLCAIAWLVRPELFTLKPCFVAVETQGEFTSGTTVVDIDGCLGKPANVQVALDLDVKGFQQWVAEVLALAL.

Residue H233 is part of the active site.

It belongs to the IUNH family. RihC subfamily.

Functionally, hydrolyzes both purine and pyrimidine ribonucleosides with a broad-substrate specificity. This is Non-specific ribonucleoside hydrolase RihC from Escherichia coli O6:H1 (strain CFT073 / ATCC 700928 / UPEC).